The primary structure comprises 134 residues: Small ribosomal subunit protein bS6 (134 aa).

Positions 99–134 (EPSAMMQKRDRDERKDRERGRRRDEDGFSGDRNEEN) are disordered. Over residues 105–134 (QKRDRDERKDRERGRRRDEDGFSGDRNEEN) the composition is skewed to basic and acidic residues.

It belongs to the bacterial ribosomal protein bS6 family.

In terms of biological role, binds together with bS18 to 16S ribosomal RNA. The sequence is that of Small ribosomal subunit protein bS6 from Methylobacterium nodulans (strain LMG 21967 / CNCM I-2342 / ORS 2060).